The primary structure comprises 396 residues: Microcin B17-processing protein McbD (396 aa).

In terms of domain architecture, YcaO spans 41-396 (ASAAGETLKS…VRESKMVPFP (356 aa)).

Its subcellular location is the cytoplasm. Its function is as follows. Necessary to process the inactive microcin B17 (McbA) precursor into the active peptide. The chain is Microcin B17-processing protein McbD (mcbD) from Escherichia coli.